The following is an 89-amino-acid chain: Small ribosomal subunit protein uS15 (89 aa).

The protein belongs to the universal ribosomal protein uS15 family. As to quaternary structure, part of the 30S ribosomal subunit. Forms a bridge to the 50S subunit in the 70S ribosome, contacting the 23S rRNA.

Its function is as follows. One of the primary rRNA binding proteins, it binds directly to 16S rRNA where it helps nucleate assembly of the platform of the 30S subunit by binding and bridging several RNA helices of the 16S rRNA. In terms of biological role, forms an intersubunit bridge (bridge B4) with the 23S rRNA of the 50S subunit in the ribosome. In Nitratidesulfovibrio vulgaris (strain DP4) (Desulfovibrio vulgaris), this protein is Small ribosomal subunit protein uS15.